Here is a 124-residue protein sequence, read N- to C-terminus: Large ribosomal subunit protein uL18 (124 aa).

The protein belongs to the universal ribosomal protein uL18 family. As to quaternary structure, part of the 50S ribosomal subunit; part of the 5S rRNA/L5/L18/L25 subcomplex. Contacts the 5S and 23S rRNAs.

Functionally, this is one of the proteins that bind and probably mediate the attachment of the 5S RNA into the large ribosomal subunit, where it forms part of the central protuberance. In Parafrankia sp. (strain EAN1pec), this protein is Large ribosomal subunit protein uL18.